Reading from the N-terminus, the 651-residue chain is Endo-1,4-beta-xylanase A (651 aa).

The N-terminal stretch at Met1 to Ala30 is a signal peptide. The region spanning Ile33–Asn227 is the GH11 domain. The active-site Nucleophile is Glu124. The active-site Proton donor is the Glu214. 3 consecutive CBM6 domains span residues Ser250–Ser370, Ser387–Thr507, and Ser527–Ser647. Residues Glu253 and Glu255 each coordinate Ca(2+). Thr270 provides a ligand contact to D-xylotriose. Arg275 serves as a coordination point for Ca(2+). Copy 1 of the repeat occupies Gly278–Gln339. The 3 X 61 AA approximate repeats stretch occupies residues Gly278–Arg616. Positions 279, 336, and 363 each coordinate D-xylotriose. D-xylobiose is bound by residues Tyr279, Asn336, and Asn363. Asp365 is a Ca(2+) binding site. The stretch at Gly415 to Gln476 is repeat 2. The Ca(2+) site is built by Gln530, Glu532, and Ser552. Repeat unit 3 spans residues Gly555–Arg616. D-xylotriose contacts are provided by Tyr556, Asp613, and Asn640. Asp642 lines the Ca(2+) pocket.

The protein belongs to the glycosyl hydrolase 11 (cellulase G) family.

It localises to the secreted. The enzyme catalyses Endohydrolysis of (1-&gt;4)-beta-D-xylosidic linkages in xylans.. Its pathway is glycan degradation; xylan degradation. In terms of biological role, endoxylanase that degrades arabinoxylan and glucuronoxylan to xylobiose and xylotriose (in vitro). This is Endo-1,4-beta-xylanase A (xynA) from Thermoclostridium stercorarium (Clostridium stercorarium).